The primary structure comprises 172 residues: Phosphopantetheine adenylyltransferase (172 aa).

Thr14 serves as a coordination point for substrate. ATP-binding positions include 14–15 (TF) and His22. 3 residues coordinate substrate: Lys46, Leu78, and Arg92. ATP is bound by residues 93–95 (GMR), Glu103, and 128–134 (WLYISST).

It belongs to the bacterial CoaD family. In terms of assembly, homohexamer. Requires Mg(2+) as cofactor.

It localises to the cytoplasm. It carries out the reaction (R)-4'-phosphopantetheine + ATP + H(+) = 3'-dephospho-CoA + diphosphate. Its pathway is cofactor biosynthesis; coenzyme A biosynthesis; CoA from (R)-pantothenate: step 4/5. Its function is as follows. Reversibly transfers an adenylyl group from ATP to 4'-phosphopantetheine, yielding dephospho-CoA (dPCoA) and pyrophosphate. The chain is Phosphopantetheine adenylyltransferase from Solidesulfovibrio magneticus (strain ATCC 700980 / DSM 13731 / RS-1) (Desulfovibrio magneticus).